We begin with the raw amino-acid sequence, 347 residues long: Protein RecA (347 aa).

Residue 66–73 participates in ATP binding; sequence GPESSGKT. Positions 328-347 are disordered; sequence MPKPNAPKATDEALDETGTD.

Belongs to the RecA family.

It is found in the cytoplasm. In terms of biological role, can catalyze the hydrolysis of ATP in the presence of single-stranded DNA, the ATP-dependent uptake of single-stranded DNA by duplex DNA, and the ATP-dependent hybridization of homologous single-stranded DNAs. It interacts with LexA causing its activation and leading to its autocatalytic cleavage. This is Protein RecA from Hydrogenovibrio crunogenus (strain DSM 25203 / XCL-2) (Thiomicrospira crunogena).